Reading from the N-terminus, the 223-residue chain is MVHPLFRHAEFYTTVNHIKDLPQATGVEIAFAGRSNAGKSSAINTLVGRGRFAFTSKTPGRTQHINFFQLGEERFMVDLPGYGYAQVPLAIRQHWVHLLSTYLQTRQALYGMILIMDIRHPLTKLDLQMLEWFAQTGKLVHVLLTKADKLSRSKALAVLDEIRQFLSTSYSGCTVQIFSSLTSEGAEEASRLLQDWFDEGGARVQQLNDSEISNQKKTPAKGD.

Residues 25 to 199 (TGVEIAFAGR…SRLLQDWFDE (175 aa)) form the EngB-type G domain. GTP is bound by residues 33–40 (GRSNAGKS), 60–64 (GRTQH), 78–81 (DLPG), 145–148 (TKAD), and 178–180 (FSS). Mg(2+) is bound by residues Ser40 and Thr62.

This sequence belongs to the TRAFAC class TrmE-Era-EngA-EngB-Septin-like GTPase superfamily. EngB GTPase family. Requires Mg(2+) as cofactor.

In terms of biological role, necessary for normal cell division and for the maintenance of normal septation. This chain is Probable GTP-binding protein EngB, found in Nitrosomonas eutropha (strain DSM 101675 / C91 / Nm57).